Here is a 374-residue protein sequence, read N- to C-terminus: UDP-N-acetylglucosamine--N-acetylmuramyl-(pentapeptide) pyrophosphoryl-undecaprenol N-acetylglucosamine transferase (374 aa).

UDP-N-acetyl-alpha-D-glucosamine-binding positions include 14 to 16 (TGG), N125, R168, S196, and Q297.

The protein belongs to the glycosyltransferase 28 family. MurG subfamily.

The protein localises to the cell inner membrane. The enzyme catalyses di-trans,octa-cis-undecaprenyl diphospho-N-acetyl-alpha-D-muramoyl-L-alanyl-D-glutamyl-meso-2,6-diaminopimeloyl-D-alanyl-D-alanine + UDP-N-acetyl-alpha-D-glucosamine = di-trans,octa-cis-undecaprenyl diphospho-[N-acetyl-alpha-D-glucosaminyl-(1-&gt;4)]-N-acetyl-alpha-D-muramoyl-L-alanyl-D-glutamyl-meso-2,6-diaminopimeloyl-D-alanyl-D-alanine + UDP + H(+). It functions in the pathway cell wall biogenesis; peptidoglycan biosynthesis. In terms of biological role, cell wall formation. Catalyzes the transfer of a GlcNAc subunit on undecaprenyl-pyrophosphoryl-MurNAc-pentapeptide (lipid intermediate I) to form undecaprenyl-pyrophosphoryl-MurNAc-(pentapeptide)GlcNAc (lipid intermediate II). In Rhodopseudomonas palustris (strain BisA53), this protein is UDP-N-acetylglucosamine--N-acetylmuramyl-(pentapeptide) pyrophosphoryl-undecaprenol N-acetylglucosamine transferase.